The sequence spans 268 residues: Ribosomal RNA small subunit methyltransferase A (268 aa).

S-adenosyl-L-methionine-binding residues include Asn-18, Leu-20, Gly-45, Glu-66, Asp-91, and Asn-112.

The protein belongs to the class I-like SAM-binding methyltransferase superfamily. rRNA adenine N(6)-methyltransferase family. RsmA subfamily.

It is found in the cytoplasm. It carries out the reaction adenosine(1518)/adenosine(1519) in 16S rRNA + 4 S-adenosyl-L-methionine = N(6)-dimethyladenosine(1518)/N(6)-dimethyladenosine(1519) in 16S rRNA + 4 S-adenosyl-L-homocysteine + 4 H(+). Specifically dimethylates two adjacent adenosines (A1518 and A1519) in the loop of a conserved hairpin near the 3'-end of 16S rRNA in the 30S particle. May play a critical role in biogenesis of 30S subunits. The protein is Ribosomal RNA small subunit methyltransferase A of Shewanella baltica (strain OS223).